The following is a 358-amino-acid chain: Neutral protease 2 homolog MEP8 (358 aa).

Residues 1–19 (MKLSSILLALAALVSPAFS) form the signal peptide. A propeptide spanning residues 20 to 179 (YAISHLPRSE…EKAIKPVDKR (160 aa)) is cleaved from the precursor. 2 cysteine pairs are disulfide-bonded: cysteine 186-cysteine 256 and cysteine 263-cysteine 281. Histidine 305 provides a ligand contact to Zn(2+). Residue glutamate 306 is part of the active site. Zn(2+) contacts are provided by histidine 309 and aspartate 320.

Belongs to the peptidase M35 family. Zn(2+) is required as a cofactor.

The protein resides in the secreted. It carries out the reaction Preferential cleavage of bonds with hydrophobic residues in P1'. Also 3-Asn-|-Gln-4 and 8-Gly-|-Ser-9 bonds in insulin B chain.. Functionally, secreted metalloproteinase that allows assimilation of proteinaceous substrates. Shows high activities on basic nuclear substrates such as histone and protamine. May be involved in virulence. In Coccidioides posadasii (strain C735) (Valley fever fungus), this protein is Neutral protease 2 homolog MEP8 (MEP8).